Consider the following 479-residue polypeptide: MAEKSYQAGVKEYRKTYWTPDYVPLDTDLLAVFKIVAQAGVPREEAAAAVAAESSTGTWTTVWTDLLTDLDYYKGRAYRIEPVPGDDNAFYAFIAYPIDLFEEGSVVNVLTSLVGNVFGFKAVRSLRLEDIRFPLAYVKTCGGPPNGIQLERDRLNKYGRPLLGCTIKPKLGLSAKNYGRAVYECLRGGLDFTKDDENINSQPFMRWQHRFEFVMEAVHKATSETGERKGHYLNVTAPTPEEMYKRAEFAKSLGAPIIMHDFLTAGFTANTGLANWCRENGMLLHIHRAMHAVLDRNPMHGIHFRVLTKCLRLSGGDHLHSGTVVGKLEGDREATIGWVDLMREPFVPENRARGIFFDQDWGAMPGVMPVASGGIHVWHMPALTAIFGDDACFQFGGGTLGHPWGNAAGAHANRVALEACVEARNQGRPVEREGREILTEAAQHSPELKIAMETWKEIKFEFDVVDKLDTGPMLRVVNA.

Residues Asn-116 and Thr-166 each coordinate substrate. Lys-168 functions as the Proton acceptor in the catalytic mechanism. Position 170 (Lys-170) interacts with substrate. 3 residues coordinate Mg(2+): Lys-194, Asp-196, and Glu-197. At Lys-194 the chain carries N6-carboxylysine. Residue His-287 is the Proton acceptor of the active site. Positions 288, 320, and 372 each coordinate substrate.

It belongs to the RuBisCO large chain family. Type I subfamily. Heterohexadecamer of 8 large chains and 8 small chains. Mg(2+) is required as a cofactor.

The enzyme catalyses 2 (2R)-3-phosphoglycerate + 2 H(+) = D-ribulose 1,5-bisphosphate + CO2 + H2O. It carries out the reaction D-ribulose 1,5-bisphosphate + O2 = 2-phosphoglycolate + (2R)-3-phosphoglycerate + 2 H(+). Functionally, ruBisCO catalyzes two reactions: the carboxylation of D-ribulose 1,5-bisphosphate, the primary event in carbon dioxide fixation, as well as the oxidative fragmentation of the pentose substrate. Both reactions occur simultaneously and in competition at the same active site. The chain is Ribulose bisphosphate carboxylase large chain 2 from Bradyrhizobium sp. (strain BTAi1 / ATCC BAA-1182).